Consider the following 632-residue polypeptide: Serine/threonine-protein kinase plk-2 (632 aa).

Residues 1-26 form a disordered region; sequence MQRVQPSAARVKSQKKEKAPPDVPDV. The region spanning 36 to 287 is the Protein kinase domain; the sequence is YEKGKFLGKG…ARAVCRDHFF (252 aa). Residues 42 to 50 and Lys-65 each bind ATP; that span reads LGKGGFAHC. Asp-159 (proton acceptor) is an active-site residue. The segment at 313 to 334 is disordered; that stretch reads AEENVSPSGTIDQRGPHQAGRS. POLO box domains lie at 405–484 and 506–588; these read WISK…YMND and TLRV…RLVE.

Belongs to the protein kinase superfamily. Ser/Thr protein kinase family. CDC5/Polo subfamily. Interacts (via POLO box domain) with mex-5 and mex-6. Interacts (via POLO box domain) with him-8 (via N-terminus); the interaction mediates plk-2 recruitment to the pairing region of X chromosomes during meiosis. Interacts with sun-1. May interact with nicotinic acetylcholine receptor. It depends on Mg(2+) as a cofactor. In terms of tissue distribution, expressed in oocytes.

It is found in the nucleus. The protein localises to the cytoplasm. Its subcellular location is the cytoskeleton. The protein resides in the microtubule organizing center. It localises to the centrosome. It is found in the chromosome. The protein localises to the centromere. Its subcellular location is the kinetochore. The enzyme catalyses L-seryl-[protein] + ATP = O-phospho-L-seryl-[protein] + ADP + H(+). The catalysed reaction is L-threonyl-[protein] + ATP = O-phospho-L-threonyl-[protein] + ADP + H(+). In terms of biological role, serine/threonine-protein kinase which plays a role, during oogenesis, in chromosome pairing and synapsis, by facilitating the recruitment and attachment of meiotic chromosomes to the nuclear envelope during prophase. Promotes the localization of brc-1 to the short arm of homologous chromosomes during meiotic prophase I. Regulates the formation of sun-1 patches along the nuclear envelope. Promotes meiotic nuclei apoptosis in response to chromosomal asynapsis. Plays a redundant role with plk-1 in the establishment of cell polarity downstream of mex-5 and mex-6 during the first embryonic cell divisions. Plays a role in nicotinic acetylcholine receptor-mediated sensitivity to nicotine but not levamisole. Regulates motility. This chain is Serine/threonine-protein kinase plk-2, found in Caenorhabditis elegans.